We begin with the raw amino-acid sequence, 361 residues long: Probable G-protein coupled receptor 25 (361 aa).

Residues 1 to 39 (MAPTEPWSPSPGSAPWDYSGLDGLEELELCPAGDLPYGY) lie on the Extracellular side of the membrane. A helical transmembrane segment spans residues 40–60 (VYIPALYLAAFAVGLLGNAFV). At 61-75 (VWLLAGRRGPRRLVD) the chain is on the cytoplasmic side. A helical membrane pass occupies residues 76–96 (TFVLHLAAADLGFVLTLPLWA). Residues 97 to 126 (AAAALGGRWPFGDGLCKLSSFALAGTRCAG) lie on the Extracellular side of the membrane. The helical transmembrane segment at 127–147 (ALLLAGMSVDRYLAVVKLLEA) threads the bilayer. Over 148-155 (RPLRTPRC) the chain is Cytoplasmic. A helical membrane pass occupies residues 156-176 (ALASCCGVWAVALLAGLPSLV). Over 177–200 (YRGLQPLPGGQDSQCGEEPSHAFQ) the chain is Extracellular. A helical transmembrane segment spans residues 201-220 (GLSLLLLLLTFVLPLVVTLF). The Cytoplasmic segment spans residues 221-242 (CYCRISRRLRRPPHVGRARRNS). The chain crosses the membrane as a helical span at residues 243 to 263 (LRIIFAIESTFVGSWLPFSAL). At 264–289 (RAVFHLARLGALPLPCPLLLALRWGL) the chain is on the extracellular side. Residues 290 to 310 (TIATCLAFVNSCANPLIYLLL) traverse the membrane as a helical segment. The Cytoplasmic portion of the chain corresponds to 311-361 (DRSFRARALDGACGRTGRLARRISSASSLSRDDSSVFRCRAQAANTASASW).

It belongs to the G-protein coupled receptor 1 family.

The protein localises to the cell membrane. Orphan receptor. This chain is Probable G-protein coupled receptor 25 (GPR25), found in Homo sapiens (Human).